The following is a 339-amino-acid chain: Undecaprenyl-phosphate 4-deoxy-4-formamido-L-arabinose transferase (339 aa).

2 helical membrane-spanning segments follow: residues 235 to 255 (LSLV…FLLV) and 269 to 289 (LFVL…GMGL).

Belongs to the glycosyltransferase 2 family.

The protein resides in the cell inner membrane. The enzyme catalyses UDP-4-deoxy-4-formamido-beta-L-arabinose + di-trans,octa-cis-undecaprenyl phosphate = 4-deoxy-4-formamido-alpha-L-arabinopyranosyl di-trans,octa-cis-undecaprenyl phosphate + UDP. The protein operates within glycolipid biosynthesis; 4-amino-4-deoxy-alpha-L-arabinose undecaprenyl phosphate biosynthesis; 4-amino-4-deoxy-alpha-L-arabinose undecaprenyl phosphate from UDP-4-deoxy-4-formamido-beta-L-arabinose and undecaprenyl phosphate: step 1/2. It functions in the pathway bacterial outer membrane biogenesis; lipopolysaccharide biosynthesis. Catalyzes the transfer of 4-deoxy-4-formamido-L-arabinose from UDP to undecaprenyl phosphate. The modified arabinose is attached to lipid A and is required for resistance to polymyxin and cationic antimicrobial peptides. The polypeptide is Undecaprenyl-phosphate 4-deoxy-4-formamido-L-arabinose transferase (Pseudomonas aeruginosa (strain UCBPP-PA14)).